The primary structure comprises 185 residues: Ribosome-recycling factor (185 aa).

Belongs to the RRF family.

It localises to the cytoplasm. In terms of biological role, responsible for the release of ribosomes from messenger RNA at the termination of protein biosynthesis. May increase the efficiency of translation by recycling ribosomes from one round of translation to another. The protein is Ribosome-recycling factor of Coxiella burnetii (strain CbuK_Q154) (Coxiella burnetii (strain Q154)).